The sequence spans 309 residues: Ribosomal RNA small subunit methyltransferase H (309 aa).

S-adenosyl-L-methionine is bound by residues 33-35, Asp-53, Phe-79, Asp-100, and Gln-107; that span reads GGH.

The protein belongs to the methyltransferase superfamily. RsmH family.

It is found in the cytoplasm. It carries out the reaction cytidine(1402) in 16S rRNA + S-adenosyl-L-methionine = N(4)-methylcytidine(1402) in 16S rRNA + S-adenosyl-L-homocysteine + H(+). Its function is as follows. Specifically methylates the N4 position of cytidine in position 1402 (C1402) of 16S rRNA. The sequence is that of Ribosomal RNA small subunit methyltransferase H from Clostridium kluyveri (strain NBRC 12016).